Here is a 388-residue protein sequence, read N- to C-terminus: MSKVFKKTSSNGKLSIYLGKRDFVDHVDTVEPIDGVVLVDPEYLKCRKLFVMLTCAFRYGRDDLEVIGLTFRKDLYVQTLQVVPAESSSPQGPLTVLQERLLHKLGDNAYPFTLQMVTNLPCSVTLQPGPEDAGKPCGIDFEVKSFCAENPEETVSKRDYVRLVVRKVQFAPPEAGPGPSAQTIRRFLLSAQPLQLQAWMDREVHYHGEPISVNVSINNCTNKVIKKIKISVDQITDVVLYSLDKYTKTVFIQEFTETVAANSSFSQSFAVTPILAASCQKRGLALDGKLKHEDTNLASSTIIRPGMDKELLGILVSYKVRVNLMVSCGGILGDLTASDVGVELPLVLIHPKPSHEAASSEDIVIEEFTRKGEEESQKAVEAEGDEGS.

This sequence belongs to the arrestin family. Homodimer; disulfide-linked in response to retinal illumination. Interacts with CXCR4; the interaction is dependent on the C-terminal phosphorylation of CXCR4 and modulates the calcium ion mobilization activity of CXCR4. Interacts with GPR84. Inner and outer segments, and the inner plexiform regions of the retina.

It localises to the photoreceptor inner segment. The protein resides in the cell projection. It is found in the cilium. Its subcellular location is the photoreceptor outer segment. Its function is as follows. May play a role in an as yet undefined retina-specific signal transduction. Could bind to photoactivated-phosphorylated red/green opsins. In Homo sapiens (Human), this protein is Arrestin-C (ARR3).